The chain runs to 574 residues: Septation ring formation regulator EzrA (574 aa).

Residues 1-7 (MSSGIIL) are Extracellular-facing. Residues 8–26 (LIVAIVLLVIIAYLVGVII) traverse the membrane as a helical segment. The Cytoplasmic segment spans residues 27 to 574 (RKRNDTLITS…YEKTRERIRF (548 aa)). Coiled coils occupy residues 102–131 (NFIRAKHEINSVESQLNLVEEDITAIREAL), 161–190 (ENEDNFGSTMAEIEKQMKNIEAEFSQFVAL), 276–379 (VTLD…QQEK), and 459–493 (QLEALMDELSRGRINIEAVSRLSEVATAAIANLEE).

Belongs to the EzrA family.

It is found in the cell membrane. In terms of biological role, negative regulator of FtsZ ring formation; modulates the frequency and position of FtsZ ring formation. Inhibits FtsZ ring formation at polar sites. Interacts either with FtsZ or with one of its binding partners to promote depolymerization. The sequence is that of Septation ring formation regulator EzrA from Streptococcus equi subsp. zooepidemicus (strain H70).